The sequence spans 107 residues: UPF0045 protein in glkA 3'region (107 aa).

Belongs to the UPF0045 family.

The polypeptide is UPF0045 protein in glkA 3'region (dglA) (Staphylococcus xylosus).